A 271-amino-acid polypeptide reads, in one-letter code: uncharacterized protein (271 aa).

This is an uncharacterized protein from Mycobacterium tuberculosis (strain CDC 1551 / Oshkosh).